Here is a 421-residue protein sequence, read N- to C-terminus: Phosphatidylinositol 5-phosphate 4-kinase type-2 gamma (421 aa).

Residue Ala2 is modified to N-acetylalanine. At Ser26 the chain carries Phosphoserine. In terms of domain architecture, PIPK spans 43–420; it reads AADPLVGVFL…RFLDFIANIF (378 aa). The tract at residues 69 to 75 is required for interaction with PIP5K1A; the sequence is VMLLPDD. Ser349 bears the Phosphoserine mark.

Interacts with PIP5K1A; the interaction inhibits PIP5K1A kinase activity. Phosphorylated, phosphorylation is induced by EGF.

The protein resides in the endoplasmic reticulum. It is found in the cytoplasm. The enzyme catalyses a 1,2-diacyl-sn-glycero-3-phospho-(1D-myo-inositol-5-phosphate) + ATP = a 1,2-diacyl-sn-glycero-3-phospho-(1D-myo-inositol-4,5-bisphosphate) + ADP + H(+). It catalyses the reaction 1,2-dihexadecanoyl-sn-glycero-3-phospho-(1D-myo-inositol-5-phosphate) + ATP = 1,2-dihexadecanoyl-sn-glycero-3-phospho-(1D-myo-inositol-4,5-bisphosphate) + ADP + H(+). The catalysed reaction is 1,2-dihexadecanoyl-sn-glycero-3-phospho-(1D-myo-inositol-5-phosphate) + GTP = 1,2-dihexadecanoyl-sn-glycero-3-phospho-(1D-myo-inositol-4,5-bisphosphate) + GDP + H(+). Phosphatidylinositol 5-phosphate 4-kinase with low enzymatic activity. May be a GTP sensor, has higher GTP-dependent kinase activity than ATP-dependent kinase activity. PIP4Ks negatively regulate insulin signaling through a catalytic-independent mechanism. They interact with PIP5Ks and suppress PIP5K-mediated PtdIns(4,5)P2 synthesis and insulin-dependent conversion to PtdIns(3,4,5)P3. In Mus musculus (Mouse), this protein is Phosphatidylinositol 5-phosphate 4-kinase type-2 gamma.